The chain runs to 319 residues: Olfactory receptor 51F1 (319 aa).

Residues 1–37 (MLQNQDTMEILSNSTSKFPTFLLTGIPGLESAHVWIS) lie on the Extracellular side of the membrane. Residues 38–58 (IPFCCFYAIALSGNSVILFVI) traverse the membrane as a helical segment. The Cytoplasmic portion of the chain corresponds to 59-75 (ITQQSLHEPMYYFLFRL). The chain crosses the membrane as a helical span at residues 76-96 (SATDLGLTVSSLSTTLGILWF). The Extracellular segment spans residues 97-106 (EAREISLYSC). C106 and C188 are disulfide-bonded. The chain crosses the membrane as a helical span at residues 107-127 (IVQMFFLHGFTFMESGVLVAT). Residues 128 to 149 (AFDRYVAICDPLRYTTILTNSR) are Cytoplasmic-facing. A helical membrane pass occupies residues 150–170 (IIQMGLLMITRAIVLILPLLL). At 171-211 (LLKPLYFCRMNALSHSYCYHPDVIQLACSDIRANSICGLID) the chain is on the extracellular side. The helical transmembrane segment at 212–232 (LILTTGIDTPCIVLSYILIIH) threads the bilayer. The Cytoplasmic portion of the chain corresponds to 233 to 249 (SVLRIASPEEWHKVFST). The chain crosses the membrane as a helical span at residues 250-270 (CVSHVGAVAFFYIHMLSLSLV). Topologically, residues 271–279 (YRYGRSAPR) are extracellular. Residues 280-300 (VVHSVMANVYLLLPPVLNPII) form a helical membrane-spanning segment. The Cytoplasmic segment spans residues 301-319 (DSVKTKQIRKAMLSLLLTK).

This sequence belongs to the G-protein coupled receptor 1 family.

It is found in the cell membrane. Odorant receptor. The polypeptide is Olfactory receptor 51F1 (OR51F1) (Homo sapiens (Human)).